The sequence spans 404 residues: Glucose-1-phosphate adenylyltransferase (404 aa).

Alpha-D-glucose 1-phosphate contacts are provided by residues tyrosine 99, glycine 164, 179-180 (EK), and serine 197.

This sequence belongs to the bacterial/plant glucose-1-phosphate adenylyltransferase family.

The catalysed reaction is alpha-D-glucose 1-phosphate + ATP + H(+) = ADP-alpha-D-glucose + diphosphate. It functions in the pathway glycan biosynthesis; glycogen biosynthesis. Involved in the biosynthesis of ADP-glucose building block, required in the biosynthesis of maltose-1-phosphate (M1P) and in the elongation reactions to produce linear alpha-1,4-glucans. Catalyzes the reaction between ATP and alpha-D-glucose 1-phosphate (G1P) to produce pyrophosphate and ADP-Glc. This is Glucose-1-phosphate adenylyltransferase from Mycolicibacterium smegmatis (strain ATCC 700084 / mc(2)155) (Mycobacterium smegmatis).